Here is a 175-residue protein sequence, read N- to C-terminus: RNA pyrophosphohydrolase (175 aa).

Positions 7–150 (GYRLNVGIIL…KRQVYIQALK (144 aa)) constitute a Nudix hydrolase domain. The Nudix box motif lies at 39-60 (GGLAPGETAMQAMYRELHEEVG).

This sequence belongs to the Nudix hydrolase family. RppH subfamily. A divalent metal cation serves as cofactor.

Functionally, accelerates the degradation of transcripts by removing pyrophosphate from the 5'-end of triphosphorylated RNA, leading to a more labile monophosphorylated state that can stimulate subsequent ribonuclease cleavage. This Legionella pneumophila (strain Paris) protein is RNA pyrophosphohydrolase.